The chain runs to 473 residues: Photosystem II CP43 reaction center protein (473 aa).

Positions methionine 1–glutamate 14 are excised as a propeptide. Threonine 15 bears the N-acetylthreonine mark. At threonine 15 the chain carries Phosphothreonine. The next 5 membrane-spanning stretches (helical) occupy residues leucine 69–alanine 93, leucine 134–asparagine 155, lysine 178–threonine 200, lysine 255–serine 275, and tryptophan 291–alanine 312. Residue glutamate 367 participates in [CaMn4O5] cluster binding. A helical membrane pass occupies residues arginine 447–proline 471.

The protein belongs to the PsbB/PsbC family. PsbC subfamily. In terms of assembly, PSII is composed of 1 copy each of membrane proteins PsbA, PsbB, PsbC, PsbD, PsbE, PsbF, PsbH, PsbI, PsbJ, PsbK, PsbL, PsbM, PsbT, PsbX, PsbY, PsbZ, Psb30/Ycf12, at least 3 peripheral proteins of the oxygen-evolving complex and a large number of cofactors. It forms dimeric complexes. Binds multiple chlorophylls and provides some of the ligands for the Ca-4Mn-5O cluster of the oxygen-evolving complex. It may also provide a ligand for a Cl- that is required for oxygen evolution. PSII binds additional chlorophylls, carotenoids and specific lipids. serves as cofactor.

Its subcellular location is the plastid. The protein resides in the chloroplast thylakoid membrane. One of the components of the core complex of photosystem II (PSII). It binds chlorophyll and helps catalyze the primary light-induced photochemical processes of PSII. PSII is a light-driven water:plastoquinone oxidoreductase, using light energy to abstract electrons from H(2)O, generating O(2) and a proton gradient subsequently used for ATP formation. The protein is Photosystem II CP43 reaction center protein of Coffea arabica (Arabian coffee).